Reading from the N-terminus, the 312-residue chain is Ornithine carbamoyltransferase (312 aa).

Residues 57-60 (STRT), Gln-84, Arg-108, and 135-138 (HPCQ) contribute to the carbamoyl phosphate site. Residues Asn-166, Asp-226, and 230–231 (SM) contribute to the L-ornithine site. Carbamoyl phosphate contacts are provided by residues 265-266 (CL) and Arg-293.

It belongs to the aspartate/ornithine carbamoyltransferase superfamily. OTCase family.

The protein resides in the cytoplasm. It carries out the reaction carbamoyl phosphate + L-ornithine = L-citrulline + phosphate + H(+). The protein operates within amino-acid biosynthesis; L-arginine biosynthesis; L-arginine from L-ornithine and carbamoyl phosphate: step 1/3. In terms of biological role, reversibly catalyzes the transfer of the carbamoyl group from carbamoyl phosphate (CP) to the N(epsilon) atom of ornithine (ORN) to produce L-citrulline. This is Ornithine carbamoyltransferase from Brucella ovis (strain ATCC 25840 / 63/290 / NCTC 10512).